Reading from the N-terminus, the 218-residue chain is Stromal cell-derived factor 2-like protein (218 aa).

Positions 1–21 (MALGFFCLAIFLYLSLDPDSG) are cleaved as a signal peptide. MIR domains lie at 34 to 88 (GVEI…VKPV), 96 to 151 (GDAV…LIIE), and 154 to 208 (GKTW…AAEG). Asn-214 is a glycosylation site (N-linked (GlcNAc...) asparagine).

Interacts with ERDJ3B.

The protein localises to the endoplasmic reticulum. Functionally, involved in the endoplasmic reticulum (ER) protein quality control and unfolded protein response. May be involved in the quality control of glycoproteins. Forms a complex in the ER with ERDJ3B and MED37A/BIP1 which is required for the proper accumulation and function of the surface-exposed leucine-rich repeat receptor kinases EFR involved in pathogen-associated molecular pattern (PAMP) triggered immunity. This chain is Stromal cell-derived factor 2-like protein (SDF2), found in Arabidopsis thaliana (Mouse-ear cress).